The sequence spans 150 residues: Large ribosomal subunit protein bL9 (150 aa).

The protein belongs to the bacterial ribosomal protein bL9 family.

Binds to the 23S rRNA. The polypeptide is Large ribosomal subunit protein bL9 (Lactiplantibacillus plantarum (strain ATCC BAA-793 / NCIMB 8826 / WCFS1) (Lactobacillus plantarum)).